The following is a 179-amino-acid chain: Ribosome-recycling factor (179 aa).

It belongs to the RRF family.

It is found in the cytoplasm. Its function is as follows. Responsible for the release of ribosomes from messenger RNA at the termination of protein biosynthesis. May increase the efficiency of translation by recycling ribosomes from one round of translation to another. This chain is Ribosome-recycling factor, found in Chlamydia trachomatis serovar D (strain ATCC VR-885 / DSM 19411 / UW-3/Cx).